A 164-amino-acid polypeptide reads, in one-letter code: Transcription factor E (164 aa).

The HTH TFE/IIEalpha-type domain maps to 5–87 (NDKVIRGYLR…LWHLDFSDIE (83 aa)).

The protein belongs to the TFE family. In terms of assembly, monomer. Interaction with RNA polymerase subunits RpoF and RpoE is necessary for Tfe stimulatory transcription activity. Able to interact with Tbp and RNA polymerase in the absence of DNA promoter. Interacts both with the preinitiation and elongation complexes.

Transcription factor that plays a role in the activation of archaeal genes transcribed by RNA polymerase. Facilitates transcription initiation by enhancing TATA-box recognition by TATA-box-binding protein (Tbp), and transcription factor B (Tfb) and RNA polymerase recruitment. Not absolutely required for transcription in vitro, but particularly important in cases where Tbp or Tfb function is not optimal. It dynamically alters the nucleic acid-binding properties of RNA polymerases by stabilizing the initiation complex and destabilizing elongation complexes. Seems to translocate with the RNA polymerase following initiation and acts by binding to the non template strand of the transcription bubble in elongation complexes. The chain is Transcription factor E from Methanosarcina mazei (strain ATCC BAA-159 / DSM 3647 / Goe1 / Go1 / JCM 11833 / OCM 88) (Methanosarcina frisia).